The following is a 250-amino-acid chain: Flavin-dependent thymidylate synthase (250 aa).

Positions 7-233 constitute a ThyX domain; that stretch reads LRVQLIAKTD…PSIFGDFDIA (227 aa). FAD-binding positions include Ser71, 95-97, and Gln103; that span reads RHR. DUMP-binding positions include 92 to 95, 103 to 107, and Arg172; these read ELIR and QLSQR. Positions 95 to 105 match the ThyX motif motif; it reads RHRHFSYSQLS. FAD-binding positions include 188–190 and His194; that span reads NYR. Residue Arg199 participates in dUMP binding. Arg199 (involved in ionization of N3 of dUMP, leading to its activation) is an active-site residue.

This sequence belongs to the thymidylate synthase ThyX family. As to quaternary structure, homotetramer. Requires FAD as cofactor.

The catalysed reaction is dUMP + (6R)-5,10-methylene-5,6,7,8-tetrahydrofolate + NADPH + H(+) = dTMP + (6S)-5,6,7,8-tetrahydrofolate + NADP(+). Its pathway is pyrimidine metabolism; dTTP biosynthesis. In terms of biological role, catalyzes the reductive methylation of 2'-deoxyuridine-5'-monophosphate (dUMP) to 2'-deoxythymidine-5'-monophosphate (dTMP) while utilizing 5,10-methylenetetrahydrofolate (mTHF) as the methyl donor, and NADPH and FADH(2) as the reductant. The protein is Flavin-dependent thymidylate synthase of Mycobacteroides abscessus (strain ATCC 19977 / DSM 44196 / CCUG 20993 / CIP 104536 / JCM 13569 / NCTC 13031 / TMC 1543 / L948) (Mycobacterium abscessus).